The chain runs to 399 residues: Glutathione S-transferase LANCL1 (399 aa).

Alanine 2 is modified (N-acetylalanine). Residue lysine 142 is modified to N6-acetyllysine. Cysteine 276 provides a ligand contact to Zn(2+). Lysine 317 is a binding site for glutathione. Zn(2+) is bound by residues cysteine 322 and histidine 323. 364-367 (RTPD) contacts glutathione.

It belongs to the LanC-like protein family. As to quaternary structure, interacts with the C-terminal of STOM. Interacts with the EPS8 SH3 domain. Interaction with EPS8 is inhibited by glutathione binding. As to expression, strongly expressed in the brain, testis and skeletal muscle. Expressed in the neurons of the cerebellum, the germinal cells of the seminiferous tubules in testis, in liver hepoatocytes and in cardiac myocytes.

The protein localises to the cytoplasm. The protein resides in the cell membrane. It carries out the reaction RX + glutathione = an S-substituted glutathione + a halide anion + H(+). It catalyses the reaction 1-chloro-2,4-dinitrobenzene + glutathione = 2,4-dinitrophenyl-S-glutathione + chloride + H(+). Functionally, functions as a glutathione transferase. Catalyzes conjugation of the glutathione (GSH) to artificial substrates 1-chloro-2,4-dinitrobenzene (CDNB) and p-nitrophenyl acetate. Mitigates neuronal oxidative stress during normal postnatal development and in response to oxidative stresses probably through GSH antioxidant defense mechanism. May play a role in EPS8 signaling. Binds glutathione. This is Glutathione S-transferase LANCL1 from Rattus norvegicus (Rat).